Reading from the N-terminus, the 445-residue chain is Tubulin beta chain (445 aa).

Residues Q11, E69, S138, G142, T143, G144, N204, and N226 each contribute to the GTP site. Mg(2+) is bound at residue E69. The interval Q426–A445 is disordered. A compositionally biased stretch (acidic residues) spans T429–A445.

Belongs to the tubulin family. In terms of assembly, dimer of alpha and beta chains. A typical microtubule is a hollow water-filled tube with an outer diameter of 25 nm and an inner diameter of 15 nM. Alpha-beta heterodimers associate head-to-tail to form protofilaments running lengthwise along the microtubule wall with the beta-tubulin subunit facing the microtubule plus end conferring a structural polarity. Microtubules usually have 13 protofilaments but different protofilament numbers can be found in some organisms and specialized cells. Interacts with DCX/apicortin; the interaction stabilizes microtubule assembly. Mg(2+) serves as cofactor.

The protein resides in the cytoplasm. Its subcellular location is the cytoskeleton. In terms of biological role, tubulin is the major constituent of microtubules, a cylinder consisting of laterally associated linear protofilaments composed of alpha- and beta-tubulin heterodimers. Microtubules grow by the addition of GTP-tubulin dimers to the microtubule end, where a stabilizing cap forms. Below the cap, tubulin dimers are in GDP-bound state, owing to GTPase activity of alpha-tubulin. The sequence is that of Tubulin beta chain from Plasmodium falciparum.